Reading from the N-terminus, the 142-residue chain is Small heat shock protein IbpB (142 aa).

The region spanning 25 to 136 is the sHSP domain; it reads GQEPQGFPPY…QPQRIAIGTT (112 aa).

Belongs to the small heat shock protein (HSP20) family. As to quaternary structure, homodimer. Forms homomultimers of about 100-150 subunits at optimal growth temperatures. Conformation changes to oligomers at high temperatures or high ionic concentrations. The decrease in size of the multimers is accompanied by an increase in chaperone activity.

It is found in the cytoplasm. Its function is as follows. Associates with aggregated proteins, together with IbpA, to stabilize and protect them from irreversible denaturation and extensive proteolysis during heat shock and oxidative stress. Aggregated proteins bound to the IbpAB complex are more efficiently refolded and reactivated by the ATP-dependent chaperone systems ClpB and DnaK/DnaJ/GrpE. Its activity is ATP-independent. This Serratia proteamaculans (strain 568) protein is Small heat shock protein IbpB.